Here is a 148-residue protein sequence, read N- to C-terminus: D-aminoacyl-tRNA deacylase (148 aa).

Residues 137 to 138 (GP) carry the Gly-cisPro motif, important for rejection of L-amino acids motif.

This sequence belongs to the DTD family. Homodimer.

It is found in the cytoplasm. It carries out the reaction glycyl-tRNA(Ala) + H2O = tRNA(Ala) + glycine + H(+). It catalyses the reaction a D-aminoacyl-tRNA + H2O = a tRNA + a D-alpha-amino acid + H(+). In terms of biological role, an aminoacyl-tRNA editing enzyme that deacylates mischarged D-aminoacyl-tRNAs. Also deacylates mischarged glycyl-tRNA(Ala), protecting cells against glycine mischarging by AlaRS. Acts via tRNA-based rather than protein-based catalysis; rejects L-amino acids rather than detecting D-amino acids in the active site. By recycling D-aminoacyl-tRNA to D-amino acids and free tRNA molecules, this enzyme counteracts the toxicity associated with the formation of D-aminoacyl-tRNA entities in vivo and helps enforce protein L-homochirality. In Oenococcus oeni (strain ATCC BAA-331 / PSU-1), this protein is D-aminoacyl-tRNA deacylase.